The primary structure comprises 119 residues: Large ribosomal subunit protein bL20 (119 aa).

The protein belongs to the bacterial ribosomal protein bL20 family.

Functionally, binds directly to 23S ribosomal RNA and is necessary for the in vitro assembly process of the 50S ribosomal subunit. It is not involved in the protein synthesizing functions of that subunit. The polypeptide is Large ribosomal subunit protein bL20 (Metamycoplasma arthritidis (strain 158L3-1) (Mycoplasma arthritidis)).